A 311-amino-acid polypeptide reads, in one-letter code: Splicing factor spf30 (311 aa).

Positions 76 to 139 (DFTPGNLVMA…KAMPEEKRQE (64 aa)) constitute a Tudor domain. 2 disordered regions span residues 154 to 183 (RSTPVREPTKAISVASMSTSPSNYASRASS) and 276 to 311 (STEDFPGRTNPKNFGNVARSGHREKHIYNYREDEDS). Residues 168–183 (ASMSTSPSNYASRASS) show a composition bias toward polar residues. Ser173 carries the phosphoserine modification. The span at 301–311 (HIYNYREDEDS) shows a compositional bias: basic and acidic residues.

Belongs to the SMN family. In terms of assembly, associates with spliceosomes.

The protein localises to the nucleus. Functionally, involved in spliceosome assembly. The chain is Splicing factor spf30 (spf30) from Schizosaccharomyces pombe (strain 972 / ATCC 24843) (Fission yeast).